The sequence spans 383 residues: Serine protease 23 (383 aa).

Positions 1-19 (MAGIPGLLFLLFFLLCAVG) are cleaved as a signal peptide. Residue asparagine 93 is glycosylated (N-linked (GlcNAc...) asparagine). The residue at position 109 (serine 109) is a Phosphoserine; by FAM20C. Cysteine 160 and cysteine 176 form a disulfide bridge. The active-site Charge relay system is histidine 175. Asparagine 207 carries N-linked (GlcNAc...) asparagine glycosylation. Residues aspartate 240 and serine 316 each act as charge relay system in the active site.

Belongs to the peptidase S1 family.

It localises to the secreted. The sequence is that of Serine protease 23 (PRSS23) from Homo sapiens (Human).